Reading from the N-terminus, the 257-residue chain is NAD-capped RNA hydrolase NudC (257 aa).

R69 contacts substrate. Zn(2+) is bound by residues C98 and C101. A substrate-binding site is contributed by E111. Zn(2+) contacts are provided by C116 and C119. A substrate-binding site is contributed by Y124. One can recognise a Nudix hydrolase domain in the interval 125–248 (PQIAPCIIVA…TVARRLIEDT (124 aa)). The a divalent metal cation site is built by A158, E174, and E178. The short motif at 159-180 (GFVEVGETLEQAVAREVMEESG) is the Nudix box element. Substrate is bound at residue 192 to 199 (QPWPFPQS). E219 provides a ligand contact to a divalent metal cation. A241 serves as a coordination point for substrate.

Belongs to the Nudix hydrolase family. NudC subfamily. As to quaternary structure, homodimer. Mg(2+) is required as a cofactor. Requires Mn(2+) as cofactor. The cofactor is Zn(2+).

The catalysed reaction is a 5'-end NAD(+)-phospho-ribonucleoside in mRNA + H2O = a 5'-end phospho-adenosine-phospho-ribonucleoside in mRNA + beta-nicotinamide D-ribonucleotide + 2 H(+). The enzyme catalyses NAD(+) + H2O = beta-nicotinamide D-ribonucleotide + AMP + 2 H(+). It carries out the reaction NADH + H2O = reduced beta-nicotinamide D-ribonucleotide + AMP + 2 H(+). Functionally, mRNA decapping enzyme that specifically removes the nicotinamide adenine dinucleotide (NAD) cap from a subset of mRNAs by hydrolyzing the diphosphate linkage to produce nicotinamide mononucleotide (NMN) and 5' monophosphate mRNA. The NAD-cap is present at the 5'-end of some mRNAs and stabilizes RNA against 5'-processing. Has preference for mRNAs with a 5'-end purine. Catalyzes the hydrolysis of a broad range of dinucleotide pyrophosphates. The sequence is that of NAD-capped RNA hydrolase NudC from Salmonella typhi.